The following is a 194-amino-acid chain: Probable GTP-binding protein EngB (194 aa).

One can recognise an EngB-type G domain in the interval 22 to 194 (DLPEYALAGR…AWQFIKEGME (173 aa)). Residues 30–37 (GRSNVGKS), 57–61 (GKTQT), 75–78 (DVPG), 142–145 (TKAD), and 174–176 (FSS) contribute to the GTP site. Mg(2+)-binding residues include S37 and T59.

The protein belongs to the TRAFAC class TrmE-Era-EngA-EngB-Septin-like GTPase superfamily. EngB GTPase family. Mg(2+) is required as a cofactor.

In terms of biological role, necessary for normal cell division and for the maintenance of normal septation. The protein is Probable GTP-binding protein EngB of Listeria innocua serovar 6a (strain ATCC BAA-680 / CLIP 11262).